The primary structure comprises 336 residues: HTH-type transcriptional repressor PurR (336 aa).

The HTH lacI-type domain maps to 2 to 56 (ATIKDVAKLAGVSTTTVSHVINKTRFVAEDTSKAVWDAIQQLNYSPSAVARSLKV). The H-T-H motif DNA-binding region spans 4-23 (IKDVAKLAGVSTTTVSHVIN). Residues 48 to 56 (SAVARSLKV) mediate DNA binding. Positions 73, 188, 219, and 273 each coordinate hypoxanthine.

As to quaternary structure, homodimer.

It participates in purine metabolism; purine nucleotide biosynthesis [regulation]. Its function is as follows. Is the main repressor of the genes involved in the de novo synthesis of purine nucleotides, regulating purB, purC, purEK, purF, purHD, purL, purMN and guaBA expression. PurR is allosterically activated to bind its cognate DNA by binding the purine corepressors, hypoxanthine or guanine, thereby effecting transcription repression. The chain is HTH-type transcriptional repressor PurR from Actinobacillus pleuropneumoniae serotype 5b (strain L20).